Reading from the N-terminus, the 327-residue chain is MKNIAILCSGGDVSGMNAALKRFVEYAFDQGLTPFFVENGYEGLIDNKISKADYSDVAGIISIGGTKIRTSRSERFKEISYRQIALENLRGHGIDGLIVLGGDGSFKGMQKLSDECNDIGFIGIPSTIDNDIAGTQYCLGVDTALNAIRVAIDSIRDTASSFGRAFVIEVMGRECGYLALVSALTSGAEMCLIPEVPYNLEVYKEEFLEEKEQGRTYFIAVVSEALKNTEQIVRWFEEEIDIESRMTVLGHIQRGGIPTVHDRLMAFHFVTSAIDALREGTKSKVVCYDDGMFICKDIKDVAFKKYMIDEDLLALGREFESPQHKQV.

ATP contacts are provided by residues G11, 72–73 (RS), and 102–105 (GDGS). D103 serves as a coordination point for Mg(2+). 127 to 129 (TID) contributes to the substrate binding site. D129 (proton acceptor) is an active-site residue. An ADP-binding site is contributed by R156. Residues R164 and 171-173 (MGR) contribute to the substrate site. 187-189 (GAE) serves as a coordination point for ADP. Substrate-binding positions include E224, R245, and 251-254 (HIQR).

Belongs to the phosphofructokinase type A (PFKA) family. ATP-dependent PFK group I subfamily. Prokaryotic clade 'B1' sub-subfamily. As to quaternary structure, homotetramer. The cofactor is Mg(2+).

Its subcellular location is the cytoplasm. The catalysed reaction is beta-D-fructose 6-phosphate + ATP = beta-D-fructose 1,6-bisphosphate + ADP + H(+). The protein operates within carbohydrate degradation; glycolysis; D-glyceraldehyde 3-phosphate and glycerone phosphate from D-glucose: step 3/4. Its activity is regulated as follows. Allosterically activated by ADP and other diphosphonucleosides, and allosterically inhibited by phosphoenolpyruvate. Catalyzes the phosphorylation of D-fructose 6-phosphate to fructose 1,6-bisphosphate by ATP, the first committing step of glycolysis. The chain is ATP-dependent 6-phosphofructokinase from Sulfurovum sp. (strain NBC37-1).